The chain runs to 59 residues: UPF0434 protein plu1633 (59 aa).

This sequence belongs to the UPF0434 family.

This is UPF0434 protein plu1633 from Photorhabdus laumondii subsp. laumondii (strain DSM 15139 / CIP 105565 / TT01) (Photorhabdus luminescens subsp. laumondii).